Consider the following 61-residue polypeptide: Temporin-SN3 (61 aa).

An N-terminal signal peptide occupies residues 1-22; it reads MFTLKKTLLLLFFLGTINLSLC. A propeptide spans 23 to 44 (removed in mature form); it reads EEERNAEEERRDGDDEMDVEVK. Lys-61 is modified (lysine amide).

Belongs to the frog skin active peptide (FSAP) family. Temporin subfamily. In terms of tissue distribution, expressed by the skin glands.

The protein localises to the secreted. Its function is as follows. Antimicrobial peptide. Active against some Gram-positive and Gram-negative bacterial strains. Active against fungus C.glabrata 090902 but not against C.albicans ATCC 12231. Shows weak hemolytic activity against human erythrocytes. This is Temporin-SN3 from Sylvirana spinulosa (Fine-spined frog).